The primary structure comprises 808 residues: N-terminal kinase-like protein (808 aa).

A Protein kinase domain is found at 14 to 314 (FELIPEPPEG…PEDFCRHKVL (301 aa)). 3 HEAT repeats span residues 350–388 (IIPVVVKMFSSTDRAMRIRLLQQMEQFIQYLDEPTVNTQ), 389–427 (IFPHVVHGFLDTNPAIREQTVKSMLLLAPKLNEANLNVE), and 507–545 (ILPVLCGLTVDPEKSVRDQAFKAIRSFLSKLESVSEDPT). Disordered stretches follow at residues 540–566 (VSEDPTQLEEVEKDVHAASSPGMGGAA), 587–646 (SHPT…RWDD), and 658–808 (SVLA…RKLD). Residues 556 to 566 (AASSPGMGGAA) are compositionally biased toward low complexity. A compositionally biased stretch (polar residues) spans 587 to 600 (SHPTTAPTETNIPQ). Positions 601-617 (RPTPEGVPAPAPTPVPA) are enriched in pro residues. The span at 660-680 (LAQQDDWSTGGQVSRASQVSN) shows a compositional bias: polar residues. Residues 681–690 (SDHKSSKSPE) are compositionally biased toward basic and acidic residues. Ser-754 is subject to Phosphoserine. The segment covering 755–764 (WGEDNWEGLE) has biased composition (acidic residues). A coiled-coil region spans residues 761–797 (EGLETDSRQVKAELARKKREERRREMEAKRAERKVAK). 2 stretches are compositionally biased toward basic and acidic residues: residues 765–775 (TDSRQVKAELA) and 782–795 (RRREMEAKRAERKV). The segment at 793–808 (RKVAKGPMKLGARKLD) is interaction with COPB1.

It belongs to the protein kinase superfamily. Interacts with GORAB. Interacts with COPA, COPB1 and COPB2. Homooligomer. Interacts with AP2B1. In terms of tissue distribution, ubiquitous.

The protein localises to the cytoplasm. It localises to the cytoskeleton. It is found in the microtubule organizing center. The protein resides in the centrosome. Its subcellular location is the endoplasmic reticulum-Golgi intermediate compartment. The protein localises to the golgi apparatus. It localises to the cis-Golgi network. It is found in the nucleus. In terms of biological role, regulates COPI-mediated retrograde protein traffic at the interface between the Golgi apparatus and the endoplasmic reticulum. Involved in the maintenance of the Golgi apparatus morphology. Its function is as follows. Acts as a transcriptional activator. It binds to three different types of GC-rich DNA binding sites (box-A, -B and -C) in the beta-polymerase promoter region. It also binds to the TERT promoter region. In Homo sapiens (Human), this protein is N-terminal kinase-like protein (SCYL1).